The primary structure comprises 400 residues: Elongation factor Tu (400 aa).

Residues 10-209 (KEHVNIGTIG…QVDNWIDAPL (200 aa)) form the tr-type G domain. Residues 19–26 (GHVDHGKT) form a G1 region. 19–26 (GHVDHGKT) is a GTP binding site. Thr26 is a binding site for Mg(2+). The segment at 61-65 (GITIN) is G2. The segment at 82-85 (DCPG) is G3. GTP-binding positions include 82–86 (DCPGH) and 137–140 (NKVD). The G4 stretch occupies residues 137-140 (NKVD). The segment at 179–181 (SAL) is G5.

It belongs to the TRAFAC class translation factor GTPase superfamily. Classic translation factor GTPase family. EF-Tu/EF-1A subfamily. Monomer.

The protein resides in the cytoplasm. The catalysed reaction is GTP + H2O = GDP + phosphate + H(+). GTP hydrolase that promotes the GTP-dependent binding of aminoacyl-tRNA to the A-site of ribosomes during protein biosynthesis. This chain is Elongation factor Tu, found in Mycoplasma mobile (strain ATCC 43663 / 163K / NCTC 11711) (Mesomycoplasma mobile).